The following is a 107-amino-acid chain: Late histone H2B.L4 (107 aa).

An O-linked (GlcNAc) serine glycan is attached at Ser-94. A Glycyl lysine isopeptide (Lys-Gly) (interchain with G-Cter in ubiquitin) cross-link involves residue Lys-102.

It belongs to the histone H2B family. As to quaternary structure, the nucleosome is a histone octamer containing two molecules each of H2A, H2B, H3 and H4 assembled in one H3-H4 heterotetramer and two H2A-H2B heterodimers. The octamer wraps approximately 147 bp of DNA. In terms of processing, monoubiquitination gives a specific tag for epigenetic transcriptional activation and is also prerequisite for histone H3 'Lys-4' and 'Lys-79' methylation. Post-translationally, glcNAcylation at Ser-94 promotes monoubiquitination of Lys-102. It fluctuates in response to extracellular glucose, and associates with transcribed genes.

It is found in the nucleus. The protein resides in the chromosome. Its function is as follows. Core component of nucleosome. Nucleosomes wrap and compact DNA into chromatin, limiting DNA accessibility to the cellular machineries which require DNA as a template. Histones thereby play a central role in transcription regulation, DNA repair, DNA replication and chromosomal stability. DNA accessibility is regulated via a complex set of post-translational modifications of histones, also called histone code, and nucleosome remodeling. The chain is Late histone H2B.L4 from Strongylocentrotus purpuratus (Purple sea urchin).